The sequence spans 121 residues: Small ribosomal subunit protein uS13 (121 aa).

A disordered region spans residues 91–121 (HRMSLPVRGQRTRTNARTRRGSRKTVAGRKK). Over residues 100–121 (QRTRTNARTRRGSRKTVAGRKK) the composition is skewed to basic residues.

It belongs to the universal ribosomal protein uS13 family. Part of the 30S ribosomal subunit. Forms a loose heterodimer with protein S19. Forms two bridges to the 50S subunit in the 70S ribosome.

Functionally, located at the top of the head of the 30S subunit, it contacts several helices of the 16S rRNA. In the 70S ribosome it contacts the 23S rRNA (bridge B1a) and protein L5 of the 50S subunit (bridge B1b), connecting the 2 subunits; these bridges are implicated in subunit movement. Contacts the tRNAs in the A and P-sites. The polypeptide is Small ribosomal subunit protein uS13 (Prochlorococcus marinus (strain MIT 9515)).